The following is a 210-amino-acid chain: Cytochrome c biogenesis ATP-binding export protein CcmA (210 aa).

The ABC transporter domain maps to 3 to 205; sequence LHLQAAGLAC…KPSGYRELNL (203 aa). Residue 37-44 coordinates ATP; that stretch reads GPNGSGKT.

Belongs to the ABC transporter superfamily. CcmA exporter (TC 3.A.1.107) family. As to quaternary structure, the complex is composed of two ATP-binding proteins (CcmA) and two transmembrane proteins (CcmB).

The protein resides in the cell inner membrane. It catalyses the reaction heme b(in) + ATP + H2O = heme b(out) + ADP + phosphate + H(+). Functionally, part of the ABC transporter complex CcmAB involved in the biogenesis of c-type cytochromes; once thought to export heme, this seems not to be the case, but its exact role is uncertain. Responsible for energy coupling to the transport system. In Pseudomonas putida (strain GB-1), this protein is Cytochrome c biogenesis ATP-binding export protein CcmA.